A 218-amino-acid polypeptide reads, in one-letter code: Probable nicotinate-nucleotide adenylyltransferase (218 aa).

Belongs to the NadD family.

It carries out the reaction nicotinate beta-D-ribonucleotide + ATP + H(+) = deamido-NAD(+) + diphosphate. It functions in the pathway cofactor biosynthesis; NAD(+) biosynthesis; deamido-NAD(+) from nicotinate D-ribonucleotide: step 1/1. Its function is as follows. Catalyzes the reversible adenylation of nicotinate mononucleotide (NaMN) to nicotinic acid adenine dinucleotide (NaAD). This chain is Probable nicotinate-nucleotide adenylyltransferase, found in Burkholderia lata (strain ATCC 17760 / DSM 23089 / LMG 22485 / NCIMB 9086 / R18194 / 383).